A 3674-amino-acid polypeptide reads, in one-letter code: Dystrophin (3674 aa).

The segment at 1–236 (MSEVSSDERE…YVTSLFQVLP (236 aa)) is actin-binding. Calponin-homology (CH) domains follow at residues 11-115 (DVQK…LHWQ) and 130-236 (TNSE…QVLP). An ANK2- and ANK-3 binding region spans residues 59 to 68 (PKEKGSTRVH). Over residues 306-318 (SDPTRSPFPSQRL) the composition is skewed to polar residues. Residues 306-325 (SDPTRSPFPSQRLESPEDKS) form a disordered region. Spectrin repeat units lie at residues 335 to 443 (VNLD…NLHK), 444 to 552 (VLMD…LLQD), 555 to 663 (LKWQ…QISQ), 715 to 824 (EIRK…WLEY), 826 to 930 (NRII…ELQI), 939 to 1041 (RYQE…KLEE), 1044 to 1150 (AKLR…ALKG), 1153 to 1259 (DKTI…TLEE), 1262 to 1363 (ACWH…LLEQ), 1364 to 1459 (SIQS…LFQK), 1464 to 1564 (EQRL…QLEK), 1567 to 1672 (KLSR…LLLE), 1675 to 1774 (KHME…KASI), 1775 to 1870 (PLKE…KALE), 1873 to 1975 (HQWY…TVHE), 1988 to 2097 (EISY…KFDR), 2100 to 2204 (EKWR…RLEE), 2207 to 2314 (NILS…EIEA), 2315 to 2412 (HIKD…LRAK), 2464 to 2566 (FNRA…QLNE), 2569 to 2675 (KDST…VLEE), 2678 to 2791 (RLLQ…HLEA), 2797 to 2919 (KRLH…RKID), and 2924 to 3029 (RLQE…QLHE). The interaction with SYNM stretch occupies residues 1411 to 1909 (SDLTSHEISL…PEPQDEKKIK (499 aa)). Positions 3044–3077 (TSVQGPWERAISPNKVPYYINHETQTTCWDHPKM) constitute a WW domain. The interaction with SYNM stretch occupies residues 3047 to 3397 (QGPWERAISP…TVLEGDNMET (351 aa)). The segment at 3297-3353 (KHQAKCNICKECPIIGFRYRSLKHFNYDICQSCFFSGRVAKGHKMHYPMVEYCTPTT) adopts a ZZ-type; degenerate zinc-finger fold. 4 residues coordinate Zn(2+): C3302, C3305, C3326, and C3329. Residues 3455–3507 (DDEHLLIQHYCQSLNQDSPLSQPRSPAQILISLESEERGELERILADLEEENR) are binds to SNTB1. 3 positions are modified to phosphoserine: S3472, S3479, and S3489. Disordered stretches follow at residues 3517–3543 (KQQHEHKGLSPLPSPPEMMPTSPQSPR) and 3590–3674 (QAEA…EDTM). Composition is skewed to polar residues over residues 3596–3615 (NGTTVSSPSTSLQRSDSSQP) and 3651–3662 (QLNNSFPSSRGR). Phosphoserine is present on residues S3601, S3602, S3606, S3612, S3613, and S3655.

As to quaternary structure, interacts with SYNM. Interacts with the syntrophins SNTG1 and SNTG2. Interacts with KRT19. Component of the dystrophin-associated glycoprotein complex which is composed of three subcomplexes: a cytoplasmic complex comprised of DMD (or UTRN), DTNA and a number of syntrophins, such as SNTB1, SNTB2, SNTG1 and SNTG2, the transmembrane dystroglycan complex, and the sarcoglycan-sarcospan complex. Interacts with DAG1 (betaDAG1) with DMD; the interaction is inhibited by phosphorylation on the PPXY motif of DAG1. Interacts with SYNM; SNTA1 and SNTB1. Interacts with CMYA5. Directly interacts with ANK2 and ANK3; these interactions do not interfere with betaDAG1-binding and are necessary for proper localization in muscle cells. Identified in a dystroglycan complex that contains at least PRX, DRP2, UTRN, DMD and DAG1. Interacts with DTNB. Interacts with PGM5; the interaction is direct. Interacts with NOS1; localizes NOS1 to sarcolemma in muscle cells. In the retina, expressed in the outer plexiform layer (OPL) and around the blood vessels. Also observed at the vitreal border of the retina corresponding to the inner limiting membrane (ILM). Presynaptically localized in cone pedicles and postsynaptically in bipolar cells (at protein level).

The protein resides in the cell membrane. The protein localises to the sarcolemma. It localises to the cytoplasm. It is found in the cytoskeleton. Its subcellular location is the postsynaptic cell membrane. Anchors the extracellular matrix to the cytoskeleton via F-actin. Ligand for dystroglycan. Component of the dystrophin-associated glycoprotein complex which accumulates at the neuromuscular junction (NMJ) and at a variety of synapses in the peripheral and central nervous systems and has a structural function in stabilizing the sarcolemma. Also implicated in signaling events and synaptic transmission. This Sus scrofa (Pig) protein is Dystrophin.